A 355-amino-acid chain; its full sequence is MKIAVLPGDGIGPEIVNEAVKVLNALDEKFELEHAPVGGAGYEASGHPLPDATLALAKEADAILFGAVGDWKYDSLERALRPEQAILGLRKHLELFANFRPAICYPQLVDASPLKPELVAGLDILIVRELNGDIYFGQPRGVRAAPDGPFAGEREGFDTMRYSEPEVRRIAHVAFQAAQKRAKKLLSVDKSNVLETSQFWRDVMIDVSKEYADVELSHMYVDNAAMQLAKAPKQFDVIVTGNMFGDILSDEASMLTGSIGMLPSASLDKNNKGLYEPSHGSAPDIAGKGIANPLATILSAAMLLRYSLNRAEQADRIERAVKTVLEQGYRTGDIATPGCRQVGTAAMGDAVVAAL.

Residues Arg90, Arg100, Arg128, and Asp222 each coordinate substrate. Asp222, Asp246, and Asp250 together coordinate Mg(2+). 280-292 (GSAPDIAGKGIAN) serves as a coordination point for NAD(+).

This sequence belongs to the isocitrate and isopropylmalate dehydrogenases family. LeuB type 1 subfamily. As to quaternary structure, homodimer. Requires Mg(2+) as cofactor. Mn(2+) serves as cofactor.

Its subcellular location is the cytoplasm. The catalysed reaction is (2R,3S)-3-isopropylmalate + NAD(+) = 4-methyl-2-oxopentanoate + CO2 + NADH. It participates in amino-acid biosynthesis; L-leucine biosynthesis; L-leucine from 3-methyl-2-oxobutanoate: step 3/4. Functionally, catalyzes the oxidation of 3-carboxy-2-hydroxy-4-methylpentanoate (3-isopropylmalate) to 3-carboxy-4-methyl-2-oxopentanoate. The product decarboxylates to 4-methyl-2 oxopentanoate. In Burkholderia thailandensis (strain ATCC 700388 / DSM 13276 / CCUG 48851 / CIP 106301 / E264), this protein is 3-isopropylmalate dehydrogenase.